The primary structure comprises 233 residues: Purine nucleoside phosphorylase DeoD-type (233 aa).

Residue His4 coordinates a purine D-ribonucleoside. Residues Gly20, Arg24, Arg43, and 87–90 (RIGT) contribute to the phosphate site. Residues 179 to 181 (EME) and 203 to 204 (SD) each bind a purine D-ribonucleoside. The Proton donor role is filled by Asp204.

It belongs to the PNP/UDP phosphorylase family. As to quaternary structure, homohexamer; trimer of homodimers.

The catalysed reaction is a purine D-ribonucleoside + phosphate = a purine nucleobase + alpha-D-ribose 1-phosphate. It catalyses the reaction a purine 2'-deoxy-D-ribonucleoside + phosphate = a purine nucleobase + 2-deoxy-alpha-D-ribose 1-phosphate. Functionally, catalyzes the reversible phosphorolytic breakdown of the N-glycosidic bond in the beta-(deoxy)ribonucleoside molecules, with the formation of the corresponding free purine bases and pentose-1-phosphate. This Helicobacter pylori (strain HPAG1) protein is Purine nucleoside phosphorylase DeoD-type.